We begin with the raw amino-acid sequence, 348 residues long: Phosphate acyltransferase (348 aa).

It belongs to the PlsX family. As to quaternary structure, homodimer. Probably interacts with PlsY.

The protein localises to the cytoplasm. It catalyses the reaction a fatty acyl-[ACP] + phosphate = an acyl phosphate + holo-[ACP]. It participates in lipid metabolism; phospholipid metabolism. In terms of biological role, catalyzes the reversible formation of acyl-phosphate (acyl-PO(4)) from acyl-[acyl-carrier-protein] (acyl-ACP). This enzyme utilizes acyl-ACP as fatty acyl donor, but not acyl-CoA. The polypeptide is Phosphate acyltransferase (Francisella philomiragia subsp. philomiragia (strain ATCC 25017 / CCUG 19701 / FSC 153 / O#319-036)).